The following is a 198-amino-acid chain: LPICPSGSVGCQVSLENLFDRAVKLSHYIHSLSSEMFNEFDERYAQGRGFLTKAINGCHTSSLTTPEDKEQAQQIHHEDLLNLVLGVLRSWNDPLLHLVSEVQSIKEAPDTILKAVEIEEQDKRLLEGMEKIVGQVHPGEIENELYSPWSGLPSLQQVDEDSRLFAFYNLLHCLRRDSHKIDNYLKLLKCRLIHDNDC.

3 disulfide bridges follow: C4/C11, C58/C173, and C190/C198.

It belongs to the somatotropin/prolactin family. Pituitary gland.

It is found in the secreted. The chain is Prolactin from Chelonia mydas (Green sea-turtle).